Here is a 217-residue protein sequence, read N- to C-terminus: Kunitz-type trypsin inhibitor-like 1 protein (217 aa).

Positions 1–26 (MKPLSPLTLSFFLFVFITNLSLAFSN) are cleaved as a signal peptide. Disulfide bonds link cysteine 70-cysteine 115 and cysteine 168-cysteine 175. The N-linked (GlcNAc...) asparagine glycan is linked to asparagine 191.

The protein belongs to the protease inhibitor I3 (leguminous Kunitz-type inhibitor) family. As to expression, expressed in roots, leaves, epidermal layers of elongating stems, meristems and in the vascular system.

It is found in the secreted. Functionally, might act as a protease inhibitor involved in plant defense responses. This chain is Kunitz-type trypsin inhibitor-like 1 protein (PIP20-1), found in Pisum sativum (Garden pea).